We begin with the raw amino-acid sequence, 99 residues long: MCTSSKSLLDLIKYPILTEKTSRLIEQNQYSFAVDRKADKISIKSAVEALFDVQVVAVNTANQPLKKRRVGKFIGKKSRVKRAVVTLAPENSITFFENA.

The protein belongs to the universal ribosomal protein uL23 family. As to quaternary structure, part of the 50S ribosomal subunit.

It is found in the plastid. The protein localises to the chloroplast. In terms of biological role, binds to 23S rRNA. This is Large ribosomal subunit protein uL23c (rpl23) from Emiliania huxleyi (Coccolithophore).